The following is a 455-amino-acid chain: Retinoic acid receptor beta (455 aa).

Residues 1-87 (MTTSGHACPV…PLPPPRVYKP (87 aa)) are modulating. The tract at residues 47–78 (HPPPSGCSTPSPATIETQSTSSEELVPSPPSP) is disordered. The segment covering 53-66 (CSTPSPATIETQST) has biased composition (polar residues). Ser-77 bears the Phosphoserine mark. NR C4-type zinc fingers lie at residues 88 to 108 (CFVC…CEGC) and 124 to 148 (CHRD…LQKC). A DNA-binding region (nuclear receptor) is located at residues 88 to 153 (CFVCQDKSSG…RLQKCFEVGM (66 aa)). Residues 154–182 (SKESVRNDRNKKKKETSKQECTESYEMTA) are hinge. The NR LBD domain maps to 183-417 (ELDDLTEKIR…PLIQEMLENS (235 aa)). The disordered stretch occupies residues 415–455 (ENSEGHEPLTPSSSGNTAEHSPSISPSSVENSGVSQSPLVQ). The span at 424 to 434 (TPSSSGNTAEH) shows a compositional bias: polar residues. A compositionally biased stretch (low complexity) spans 435–455 (SPSISPSSVENSGVSQSPLVQ).

The protein belongs to the nuclear hormone receptor family. NR1 subfamily. As to quaternary structure, homodimer. Heterodimer; with a RXR molecule. Binds DNA preferentially as a RAR/RXR heterodimer. Heterodimerizes (via NR LBD) with RXRA. Interacts weakly with NCOR2. Expressed in aortic endothelial cells (at protein level).

Its subcellular location is the nucleus. It is found in the cytoplasm. Receptor for retinoic acid. Retinoic acid receptors bind as heterodimers to their target response elements in response to their ligands, all-trans or 9-cis retinoic acid, and regulate gene expression in various biological processes. The RXR/RAR heterodimers bind to the retinoic acid response elements (RARE) composed of tandem 5'-AGGTCA-3' sites known as DR1-DR5. In the absence or presence of hormone ligand, acts mainly as an activator of gene expression due to weak binding to corepressors. The RXRA/RARB heterodimer can act as a repressor on the DR1 element and as an activator on the DR5 element. In concert with RARG, required for skeletal growth, matrix homeostasis and growth plate function. The chain is Retinoic acid receptor beta (RARB) from Homo sapiens (Human).